The sequence spans 347 residues: MSALTPASEVILRHSDEFIARHVLFAGDLQDALPAQFDAAGIRVHTNQYHHWQLLSNTLDENVQFGLVATPETVAACDTLVYYWPKSKQEAQFQLANLLSLLPVGCDVFVVGENRSGVRSAEEMLSGFAQLTKIDSARRCGLYHGRLDKQPEFDADAWWESYQVGDVIVKTLPGVFSRDALDSGSHLLLSTFSEPFKGSVLDVGCGAGVLACVLAQQSPKIKWTLSDVSAAAIEASRATLAANNIEAQVIASNVYSDIKGRFEMIISNPPFHDGIQTSLTAAEMLIRGATAHLHVGGKLRIVANSFLPYPALLDAAFGSHEVLAQNGRFKVYQATVGRPPRDPKKKR.

This sequence belongs to the methyltransferase superfamily. RsmC family. Monomer.

Its subcellular location is the cytoplasm. It catalyses the reaction guanosine(1207) in 16S rRNA + S-adenosyl-L-methionine = N(2)-methylguanosine(1207) in 16S rRNA + S-adenosyl-L-homocysteine + H(+). Specifically methylates the guanine in position 1207 of 16S rRNA in the 30S particle. In Yersinia enterocolitica serotype O:8 / biotype 1B (strain NCTC 13174 / 8081), this protein is Ribosomal RNA small subunit methyltransferase C.